Consider the following 525-residue polypeptide: GMP synthase [glutamine-hydrolyzing] (525 aa).

One can recognise a Glutamine amidotransferase type-1 domain in the interval 9 to 207 (RILILDFGSQ…VLDICGCAAL (199 aa)). The active-site Nucleophile is Cys86. Catalysis depends on residues His181 and Glu183. In terms of domain architecture, GMPS ATP-PPase spans 208-400 (WTPSNIVDDA…LGLPYDMVYR (193 aa)). An ATP-binding site is contributed by 235–241 (SGGVDSS).

As to quaternary structure, homodimer.

It catalyses the reaction XMP + L-glutamine + ATP + H2O = GMP + L-glutamate + AMP + diphosphate + 2 H(+). It participates in purine metabolism; GMP biosynthesis; GMP from XMP (L-Gln route): step 1/1. In terms of biological role, catalyzes the synthesis of GMP from XMP. The protein is GMP synthase [glutamine-hydrolyzing] of Pseudomonas aeruginosa (strain UCBPP-PA14).